We begin with the raw amino-acid sequence, 336 residues long: MPRPTSPHPDAERKSASPLHPRNRHLGRYDFPRLIAGSPELERFVILNPYGRQSIDFADPAAVKAFNRALLQQFYDVREWDIPDGYLCPPIPGRADYLHYLADLLGASHDGLIPRGPGLRALDVGTGANCIYPLLGHHEYGWRFVGADIDPQSLASAAAILAANPRFAAAIELRRQPDRRQIFQGLIGVDERFDMTLCNPPFHASLDEATRGSRRKWKNLGKLDPTRTLPLLNFGGQGAELYCEGGEAAFLAGMAEESRAFATQVFWFTTLVSKASNLPNLQERLKTLGASDIRVVDMAQGQKQSRFVAWTYLDKKQRRAWRKERWTAALLEPLGE.

Residues 1-24 (MPRPTSPHPDAERKSASPLHPRNR) form a disordered region.

It belongs to the methyltransferase superfamily. METTL16/RlmF family.

It is found in the cytoplasm. The enzyme catalyses adenosine(1618) in 23S rRNA + S-adenosyl-L-methionine = N(6)-methyladenosine(1618) in 23S rRNA + S-adenosyl-L-homocysteine + H(+). Its function is as follows. Specifically methylates the adenine in position 1618 of 23S rRNA. The chain is Ribosomal RNA large subunit methyltransferase F from Pseudomonas aeruginosa (strain LESB58).